The primary structure comprises 417 residues: Hydrogen cyanide synthase subunit HcnC (417 aa).

A signal peptide spans 1 to 18 (MNRTYDIVIAGGGVIGAS). 7–21 (IVIAGGGVIGASCAY) contacts FAD. Cys-19 carries the N-palmitoyl cysteine lipid modification. Residue Cys-19 is the site of S-diacylglycerol cysteine attachment. A helical membrane pass occupies residues 46 to 66 (SAGGLWAIGESVGLGCGVIFF).

The protein belongs to the FAD-dependent glycerol-3-phosphate dehydrogenase family. As to quaternary structure, heterotrimer of HcnA, HcnB and HcnC. FAD serves as cofactor.

It is found in the cell membrane. The enzyme catalyses glycine + 2 A = hydrogen cyanide + 2 AH2 + CO2. With respect to regulation, oxygen is necessary for cyanogenesis. Activated by succinate, glycine methyl ester, glucose and D,L-methionine in addition to glycine. Phenazine methosulfate, methylene blue, 2,6-dichlorophenolindophenol (DCIP) and ferricyanide can replace oxygen for the reaction. Inhibited by pyrrolnitrin and acriflavine at 1 mM concentration. In terms of biological role, a three-component membrane-bound flavoenzyme that catalyzes the formation of hydrogen cyanide, a secondary metabolite, by transfer of electrons to a cyanide-resistant branch of the aerobic respiratory chain. This Pseudomonas aeruginosa (strain ATCC 15692 / DSM 22644 / CIP 104116 / JCM 14847 / LMG 12228 / 1C / PRS 101 / PAO1) protein is Hydrogen cyanide synthase subunit HcnC.